A 397-amino-acid chain; its full sequence is DNA-binding protein (397 aa).

Zn(2+)-binding residues include C116 and H118. The tract at residues 129–161 is flexible loop; that stretch reads IEMAATSESGVAALKEGRGAVEINRWGRQVVKI. Residues C169, C185, C225, C227, C276, and C289 each contribute to the Zn(2+) site. The C-terminal arm, DBP binding stretch occupies residues 335–397; it reads ALLPEGSVNE…IVLESSEEDE (63 aa). The tract at residues 338-397 is disordered; the sequence is PEGSVNEDENPFGLDNSEDEEEVVPPSPPSPARKRTRTTVAEVHHKKKKKIVLESSEEDE. The segment covering 342-360 has biased composition (acidic residues); the sequence is VNEDENPFGLDNSEDEEEV.

It belongs to the adenoviridae E2A DNA-binding protein family. As to quaternary structure, homomultimerizes on viral ssDNA bound to pTP. Forms a initiation complex with viral polymerase, pTP and hosts NFIA and POU2F1/OCT1. Interacts with host SRCAP.

The protein resides in the host nucleus. Plays a role in the elongation phase of viral strand displacement replication by unwinding the template in an ATP-independent fashion, employing its capacity to form multimers. Also enhances the rate of initiation. Released from template upon second strand synthesis. Assembles in complex with viral pTP, viral pol, host NFIA and host POU2F1/OCT1 on viral origin of replication. Covers the whole ssDNA genome during synthesis. The complementary strand synthesis induces its relese from DNA template. May inhibit cellular transcription mediated by the interaction between host SRCAP and CBP. This is DNA-binding protein from Snake adenovirus serotype 1 (SnAdV-1).